A 277-amino-acid polypeptide reads, in one-letter code: Myelin proteolipid protein (277 aa).

The Cytoplasmic segment spans residues 2–10 (GLLECCARC). S-palmitoyl cysteine attachment occurs at residues Cys6, Cys7, and Cys10. Residues 11-36 (LIGAPFASLVATGLCFFGVALFCGCG) form a helical membrane-spanning segment. The Extracellular segment spans residues 37–59 (HEALTGTEQLIETYFSKNYQDYE). Residues 60 to 88 (FLIDVIHGFQYFIYGTAAFFFLYGALLLA) form a helical membrane-spanning segment. The Cytoplasmic segment spans residues 89 to 151 (EGFYTTGAVR…LGKWLGHPDK (63 aa)). S-palmitoyl cysteine attachment occurs at residues Cys109, Cys139, and Cys141. The helical transmembrane segment at 152-178 (FVGITYVLTIIWLLVFACSAVPVYIYF) threads the bilayer. Topologically, residues 179 to 238 (NTWTTCQSIGNPTKTSASIGTLCADARMYGILPWNAFPGKVCGSNLLSICKTSEFQMTFH) are extracellular. 2 cysteine pairs are disulfide-bonded: Cys184/Cys228 and Cys201/Cys220. Thr199 carries the O-palmitoyl threonine lipid modification. The helical transmembrane segment at 239 to 268 (LFIAAFVGAAATLVSLVTFIIATTYNFAVL) threads the bilayer. Topologically, residues 269–277 (RLMGRGTKF) are cytoplasmic.

This sequence belongs to the myelin proteolipid protein family.

It localises to the cell membrane. Functionally, this is the major myelin protein from the central nervous system. It plays an important role in the formation or maintenance of the multilamellar structure of myelin. In Taeniopygia guttata (Zebra finch), this protein is Myelin proteolipid protein (PLP1).